Consider the following 269-residue polypeptide: Putative ankyrin repeat protein L23 (269 aa).

ANK repeat units follow at residues 118–147 (EDDY…DIKS), 148–177 (DGDY…DIRA), 179–207 (NDYA…NIRE), 208–237 (QNDY…DIRA), and 238–267 (DNDC…DIRA).

The sequence is that of Putative ankyrin repeat protein L23 from Acanthamoeba polyphaga (Amoeba).